The chain runs to 367 residues: MAVANLTTEQAILSEVHKQNRNRRALRLWLGFVLLALFCLVLVGGATRLTNSGLSITEWKPIHGVIPPLSAAEWDEEFRLYQRIPEFQQLNSSMTVDEFKSIFWWEWAHRLIARGIGVIFALPLLYFWLTGRIEKRLRWPLVGILALGALQGFIGWWMVSSGLSVRTDVSQYRLATHLVMACLIFAGCMWIMRGLSPHSNDPAPARSSRGLAAAIAVFALFQIYLGALVAGLDAGFSYNTWPLMDGAVIPSDLLIQQPFWINAFENPKTVQFIHRIGAYTLFALVLINMVIALRTAPWTTHARRAVLLFALVTVQAAIGVATLLMQVPLHWGLLHQAGALVVFGFAVANWRGFYGEYPHETMIAERD.

The next 8 membrane-spanning stretches (helical) occupy residues 25 to 45 (ALRLWLGFVLLALFCLVLVGG), 111 to 131 (LIARGIGVIFALPLLYFWLTG), 139 to 159 (WPLVGILALGALQGFIGWWMV), 174 to 194 (LATHLVMACLIFAGCMWIMRG), 210 to 230 (GLAAAIAVFALFQIYLGALVA), 272 to 292 (FIHRIGAYTLFALVLINMVIA), 305 to 325 (AVLLFALVTVQAAIGVATLLM), and 327 to 347 (VPLHWGLLHQAGALVVFGFAV). His274 contacts heme. His335 provides a ligand contact to heme.

Belongs to the COX15/CtaA family. Type 2 subfamily. As to quaternary structure, interacts with CtaB. It depends on heme b as a cofactor.

The protein resides in the cell membrane. It carries out the reaction Fe(II)-heme o + 2 A + H2O = Fe(II)-heme a + 2 AH2. Its pathway is porphyrin-containing compound metabolism; heme A biosynthesis; heme A from heme O: step 1/1. Its function is as follows. Catalyzes the conversion of heme O to heme A by two successive hydroxylations of the methyl group at C8. The first hydroxylation forms heme I, the second hydroxylation results in an unstable dihydroxymethyl group, which spontaneously dehydrates, resulting in the formyl group of heme A. The chain is Heme A synthase from Rhizobium etli (strain ATCC 51251 / DSM 11541 / JCM 21823 / NBRC 15573 / CFN 42).